Reading from the N-terminus, the 171-residue chain is Flavodoxin (171 aa).

In terms of domain architecture, Flavodoxin-like spans 4–165 (IGIFFGSDTG…RIKQWVKQII (162 aa)).

Belongs to the flavodoxin family. FMN serves as cofactor.

Low-potential electron donor to a number of redox enzymes. In Buchnera aphidicola subsp. Acyrthosiphon pisum (strain APS) (Acyrthosiphon pisum symbiotic bacterium), this protein is Flavodoxin (fldA).